Reading from the N-terminus, the 812-residue chain is MKITKNKILKNKKIINFKYQKLLDLFYNVNNQKKNNQLLSYLYSFSGKIIFSLTEEKSLKKILRFLMRHKIHPQYIKRIIDIKKEIDYFYMIEEIKNGFIDKKNNILFLCTKDLLPILIDDKYIGNIKKNTNNINKFNLSQLILNHPVMHIEHGIGRYKGLTTIETASIQSEYLVISYAEGDKLYVPVSNLHLVSPYTGTSIENAPLHKLGGDDWNKEKHKISKTVYDHAAQLLHIYAKRESKTGFAFKKNIEKYDLFCNDCSFKTTSDQNEVMKFVLKDMSKPIPMDRLICGDVGFGKTEIAMRASFLAVSNKKQVAILVPTTLLAQQHYKNFKIRFSNWPVNINILSRFQTQKEQDLIFKHTKNGRINIIIGTHKLLFKNIEWCSLGLLIIDEEHRFGVSHKEIIKKIYSNIDILTLTATPIPRTLNMAMTGIKDLSIIAKPPAQRLAIKTFIQEYSPILIRKTILREISRGGQVYYIYNKVQNIMNIAERLSILIPEASIKIGHGQMKNIDLKKVMNEFYNNKFNVLICTTIIESGVDIARANTIIIENSDHFGLSQLHQLRGRIGRSNNQAYALLLVNNFNKITSDAKKRLEAISSVDNFGGGFSLSNQDLEIRGVGEILGKEQSGHIKNIGFSLYMDLLKNAIDLLKNGKIFSVEKSLKKPLEIDLHVSSLLPSSYILDINTRLFFYKKLANAIHEKQIEEIKYELIDQFGKLPDFSKNLILIAKIRLIADKIGIKYIKSNNNIGIIEFNDYGSINTEYLLKMFQKEPKIWKMETSTRIKFILHLKNDYLRLKWIINLLRNLFKKNI.

The Helicase ATP-binding domain occupies 280-441; that stretch reads DMSKPIPMDR…MTGIKDLSII (162 aa). 293 to 300 contributes to the ATP binding site; the sequence is GDVGFGKT. A DEEH box motif is present at residues 394–397; it reads DEEH. Positions 462-621 constitute a Helicase C-terminal domain; the sequence is LIRKTILREI…NQDLEIRGVG (160 aa).

It in the N-terminal section; belongs to the UvrB family. In the C-terminal section; belongs to the helicase family. RecG subfamily.

The protein resides in the cytoplasm. Functionally, couples transcription and DNA repair by recognizing RNA polymerase (RNAP) stalled at DNA lesions. Mediates ATP-dependent release of RNAP and its truncated transcript from the DNA, and recruitment of nucleotide excision repair machinery to the damaged site. The sequence is that of Transcription-repair-coupling factor (mfd) from Buchnera aphidicola subsp. Acyrthosiphon pisum (strain APS) (Acyrthosiphon pisum symbiotic bacterium).